The following is a 127-amino-acid chain: Large ribosomal subunit protein bL12 (127 aa).

Residues 94–114 (VDGAPSTLKEAASKEEAEEAK) are disordered. Residues 104-114 (AASKEEAEEAK) are compositionally biased toward basic and acidic residues.

This sequence belongs to the bacterial ribosomal protein bL12 family. As to quaternary structure, homodimer. Part of the ribosomal stalk of the 50S ribosomal subunit. Forms a multimeric L10(L12)X complex, where L10 forms an elongated spine to which 2 to 4 L12 dimers bind in a sequential fashion. Binds GTP-bound translation factors.

In terms of biological role, forms part of the ribosomal stalk which helps the ribosome interact with GTP-bound translation factors. Is thus essential for accurate translation. The sequence is that of Large ribosomal subunit protein bL12 from Nitratidesulfovibrio vulgaris (strain ATCC 29579 / DSM 644 / CCUG 34227 / NCIMB 8303 / VKM B-1760 / Hildenborough) (Desulfovibrio vulgaris).